We begin with the raw amino-acid sequence, 121 residues long: NADH-ubiquinone oxidoreductase chain 3 (121 aa).

3 helical membrane-spanning segments follow: residues 11–31 (ILIFFAISSLLSSVIFLLSYF), 63–83 (FYLVAILFLIFDLEISFLFPW), and 90–110 (ISIIGFWSMIVFLVILTIGFI).

It belongs to the complex I subunit 3 family.

It is found in the mitochondrion membrane. It catalyses the reaction a ubiquinone + NADH + 5 H(+)(in) = a ubiquinol + NAD(+) + 4 H(+)(out). In terms of biological role, core subunit of the mitochondrial membrane respiratory chain NADH dehydrogenase (Complex I) that is believed to belong to the minimal assembly required for catalysis. Complex I functions in the transfer of electrons from NADH to the respiratory chain. The immediate electron acceptor for the enzyme is believed to be ubiquinone. The protein is NADH-ubiquinone oxidoreductase chain 3 (ND3) of Chondrus crispus (Carrageen Irish moss).